Reading from the N-terminus, the 671-residue chain is UBA domain-containing protein RUP1 (671 aa).

The 41-residue stretch at 1–41 folds into the UBA domain; sequence MMDNQAVKSLLEMGIPHEVAVDALQRTGGNLEAAVNFIFSN. S56 carries the post-translational modification Phosphoserine. The disordered stretch occupies residues 68-87; it reads GTKPCDVPNNGDQDIDMPDV. Residues 432-501 are a coiled coil; it reads SKRKQARTRS…LNSARAAKME (70 aa). Residues 643-671 are disordered; it reads DGMGDPEQATNNINNGNDNDNDDDIDSDN. Residues 661–671 are compositionally biased toward acidic residues; the sequence is NDNDDDIDSDN.

As to quaternary structure, forms a ternary complex with RSP5 and UBP2.

Its subcellular location is the cytoplasm. The protein localises to the nucleus. Functionally, modulates the activity of the RSP5 HECT ubiquitin-protein ligase through its mediation of the interaction between RSP5 and the deubiquitinase UBP2. Involved in regulation of cell wall homeostasis. In Saccharomyces cerevisiae (strain ATCC 204508 / S288c) (Baker's yeast), this protein is UBA domain-containing protein RUP1 (RUP1).